The sequence spans 168 residues: Group 2 truncated hemoglobin 3-1 (168 aa).

Position 98 (histidine 98) interacts with heme b.

It belongs to the truncated hemoglobin family. Group II subfamily. As to quaternary structure, homodimer when ferric. Mainly expressed in root nodules, but barely in leaves, roots, stems, flowers and fruits.

Its function is as follows. Hemoglobin-like protein that exhibits an unusual concentration-independent binding of O(2) and CO. Required for general plant development and during nodulation. May promote shoot organogenesis from root explants. The polypeptide is Group 2 truncated hemoglobin 3-1 (Lotus japonicus (Lotus corniculatus var. japonicus)).